Consider the following 288-residue polypeptide: Hemin import ATP-binding protein HmuV (288 aa).

An ABC transporter domain is found at 31 to 269; sequence LRARGLVVER…DLLTRVYQHP (239 aa). 68–75 is a binding site for ATP; it reads GPNGAGKS.

It belongs to the ABC transporter superfamily. Heme (hemin) importer (TC 3.A.1.14.5) family. The complex is composed of two ATP-binding proteins (HmuV), two transmembrane proteins (HmuU) and a solute-binding protein (HmuT).

It localises to the cell membrane. Functionally, part of the ABC transporter complex HmuTUV involved in hemin import. Responsible for energy coupling to the transport system. In Nocardia farcinica (strain IFM 10152), this protein is Hemin import ATP-binding protein HmuV.